Consider the following 1391-residue polypeptide: DNA-directed RNA polymerase subunit beta (1391 aa).

Belongs to the RNA polymerase beta chain family. In terms of assembly, the RNAP catalytic core consists of 2 alpha, 1 beta, 1 beta' and 1 omega subunit. When a sigma factor is associated with the core the holoenzyme is formed, which can initiate transcription.

The catalysed reaction is RNA(n) + a ribonucleoside 5'-triphosphate = RNA(n+1) + diphosphate. Functionally, DNA-dependent RNA polymerase catalyzes the transcription of DNA into RNA using the four ribonucleoside triphosphates as substrates. This Paramagnetospirillum magneticum (strain ATCC 700264 / AMB-1) (Magnetospirillum magneticum) protein is DNA-directed RNA polymerase subunit beta.